The following is a 248-amino-acid chain: uncharacterized protein (248 aa).

6 helical membrane passes run 65–85 (IIIY…QFLT), 105–125 (SITS…ILWY), 126–146 (ISWT…LGFI), 156–176 (LCCF…TLLI), 188–208 (LILN…SDYS), and 222–242 (VIYI…YKYT).

It localises to the cell membrane. This is an uncharacterized protein from Rickettsia prowazekii (strain Madrid E).